The chain runs to 279 residues: MAFQGTSRTLTQQSSAATSDDLQKILFSPEAIKKMATECDLGRHHWMRADNAISVRPLVPEVTHSRIASFFKSGYDVGELCSKGYMSVPQVLCAVTRTVSTDAEGSLRIYLADLGDKELSPIDGQCVSLHNHDLPALVSFQPTYDCPMETVGNRKRCFAVVIERHGYIGYTGTTASVCSNWQARFSSKNNNYTHIAAGKTLVLPFNRLAEQTKPSAVARLLKSQLNNIESSQYLLTNAKINQNARSESEELNVESPPAAIGSSSASRSEAFRPQVVNGL.

Residues 246 to 279 (SESEELNVESPPAAIGSSSASRSEAFRPQVVNGL) are disordered. Residues 254–268 (ESPPAAIGSSSASRS) are compositionally biased toward low complexity.

Belongs to the cucumovirus movement protein family.

Its subcellular location is the host cell junction. The protein localises to the host plasmodesma. Transports viral genome to neighboring plant cells directly through plasmosdesmata, without any budding. The movement protein allows efficient cell to cell propagation, by bypassing the host cell wall barrier. Acts by forming a tubular structure at the host plasmodesmata, enlarging it enough to allow free passage of virion capsids. This chain is Movement protein, found in Cucumber mosaic virus (strain CS) (CMV).